A 148-amino-acid polypeptide reads, in one-letter code: UPF0178 protein Pcar_2632 (148 aa).

It belongs to the UPF0178 family.

The polypeptide is UPF0178 protein Pcar_2632 (Syntrophotalea carbinolica (strain DSM 2380 / NBRC 103641 / GraBd1) (Pelobacter carbinolicus)).